The sequence spans 296 residues: 4-hydroxybenzoate octaprenyltransferase (296 aa).

8 helical membrane passes run 28–48 (PIGI…AGKG), 52–72 (LANI…GCVI), 102–122 (ALVF…CTNA), 146–166 (YYPQ…AFTA), 169–189 (GELP…TVGY), 219–239 (VIIL…GSKF), 241–261 (LGMW…WEFW), and 275–295 (FLHN…DYAL).

The protein belongs to the UbiA prenyltransferase family. Mg(2+) is required as a cofactor.

It is found in the cell inner membrane. It carries out the reaction all-trans-octaprenyl diphosphate + 4-hydroxybenzoate = 4-hydroxy-3-(all-trans-octaprenyl)benzoate + diphosphate. The protein operates within cofactor biosynthesis; ubiquinone biosynthesis. In terms of biological role, catalyzes the prenylation of para-hydroxybenzoate (PHB) with an all-trans polyprenyl group. Mediates the second step in the final reaction sequence of ubiquinone-8 (UQ-8) biosynthesis, which is the condensation of the polyisoprenoid side chain with PHB, generating the first membrane-bound Q intermediate 3-octaprenyl-4-hydroxybenzoate. This chain is 4-hydroxybenzoate octaprenyltransferase, found in Pseudomonas fluorescens (strain Pf0-1).